We begin with the raw amino-acid sequence, 88 residues long: Small ribosomal subunit protein uS17 (88 aa).

It belongs to the universal ribosomal protein uS17 family. Part of the 30S ribosomal subunit.

Its function is as follows. One of the primary rRNA binding proteins, it binds specifically to the 5'-end of 16S ribosomal RNA. The polypeptide is Small ribosomal subunit protein uS17 (Synechococcus sp. (strain WH7803)).